Reading from the N-terminus, the 403-residue chain is Guanine nucleotide-binding protein alpha-8 subunit (403 aa).

Gly2 is lipidated: N-myristoyl glycine. Residue Cys3 is the site of S-palmitoyl cysteine attachment. The G-alpha domain maps to 31-356; the sequence is LDFRILLLGA…KVLMKATKDL (326 aa). Positions 34–47 are G1 motif; it reads RILLLGAGESGKST. GTP is bound by residues 39-46, 174-180, 199-203, 268-271, and Ala324; these read GAGESGKS, IMTRVRT, DVGGQ, and NKKD. The Mg(2+) site is built by Ser46 and Thr180. The tract at residues 172–180 is G2 motif; that stretch reads DCIMTRVRT. The G3 motif stretch occupies residues 195–204; it reads FRVVDVGGQR. A G4 motif region spans residues 264–271; sequence FLVLNKKD. The G5 motif stretch occupies residues 322 to 327; sequence IAARYK. Residues 353 to 403 form a disordered region; that stretch reads TKDLKKSSKQSSKSSLGNSTQNNSNNNNNNNNSNNNNGQTTIDGATAKINS. The segment covering 374 to 389 has biased composition (low complexity); sequence NNSNNNNNNNNSNNNN. Residues 390–403 show a composition bias toward polar residues; that stretch reads GQTTIDGATAKINS.

The protein belongs to the G-alpha family. G proteins are composed of 3 units; alpha, beta and gamma. The alpha chain contains the guanine nucleotide binding site.

In terms of biological role, guanine nucleotide-binding proteins (G proteins) are involved as modulators or transducers in various transmembrane signaling systems. G alpha-8 is a potential analog for the G(s)-like G-proteins which stimulate adenylate cyclase in mammals. The polypeptide is Guanine nucleotide-binding protein alpha-8 subunit (gpaH) (Dictyostelium discoideum (Social amoeba)).